We begin with the raw amino-acid sequence, 516 residues long: GMP synthase [glutamine-hydrolyzing] (516 aa).

In terms of domain architecture, Glutamine amidotransferase type-1 spans Lys-8 to Leu-198. The active-site Nucleophile is Cys-84. Residues His-172 and Glu-174 contribute to the active site. A GMPS ATP-PPase domain is found at Trp-199–Arg-391. Ser-226–Ser-232 contributes to the ATP binding site.

Homodimer.

The catalysed reaction is XMP + L-glutamine + ATP + H2O = GMP + L-glutamate + AMP + diphosphate + 2 H(+). Its pathway is purine metabolism; GMP biosynthesis; GMP from XMP (L-Gln route): step 1/1. In terms of biological role, catalyzes the synthesis of GMP from XMP. This is GMP synthase [glutamine-hydrolyzing] from Francisella tularensis subsp. holarctica (strain FTNF002-00 / FTA).